Here is a 110-residue protein sequence, read N- to C-terminus: UPF0339 protein YegP (110 aa).

2 consecutive repeat copies span residues 10–58 (SSDN…RYEK) and 61–109 (ASNG…VKDN).

This sequence belongs to the UPF0339 family. Duplicated subfamily.

The sequence is that of UPF0339 protein YegP (yegP) from Escherichia coli O6:H1 (strain CFT073 / ATCC 700928 / UPEC).